We begin with the raw amino-acid sequence, 248 residues long: Ubiquinone/menaquinone biosynthesis C-methyltransferase UbiE (248 aa).

Residues Thr-71, Asp-92, and 120–121 each bind S-adenosyl-L-methionine; that span reads DA.

It belongs to the class I-like SAM-binding methyltransferase superfamily. MenG/UbiE family.

It carries out the reaction a 2-demethylmenaquinol + S-adenosyl-L-methionine = a menaquinol + S-adenosyl-L-homocysteine + H(+). It catalyses the reaction a 2-methoxy-6-(all-trans-polyprenyl)benzene-1,4-diol + S-adenosyl-L-methionine = a 5-methoxy-2-methyl-3-(all-trans-polyprenyl)benzene-1,4-diol + S-adenosyl-L-homocysteine + H(+). Its pathway is quinol/quinone metabolism; menaquinone biosynthesis; menaquinol from 1,4-dihydroxy-2-naphthoate: step 2/2. It functions in the pathway cofactor biosynthesis; ubiquinone biosynthesis. Functionally, methyltransferase required for the conversion of demethylmenaquinol (DMKH2) to menaquinol (MKH2) and the conversion of 2-polyprenyl-6-methoxy-1,4-benzoquinol (DDMQH2) to 2-polyprenyl-3-methyl-6-methoxy-1,4-benzoquinol (DMQH2). In Methylococcus capsulatus (strain ATCC 33009 / NCIMB 11132 / Bath), this protein is Ubiquinone/menaquinone biosynthesis C-methyltransferase UbiE.